A 311-amino-acid chain; its full sequence is Putative methylthioribose-1-phosphate isomerase (311 aa).

Substrate contacts are provided by residues 46 to 48, R80, and Q174; that span reads RGA. D215 serves as the catalytic Proton donor. 224 to 225 contacts substrate; the sequence is NK.

Belongs to the eIF-2B alpha/beta/delta subunits family. MtnA subfamily.

It catalyses the reaction 5-(methylsulfanyl)-alpha-D-ribose 1-phosphate = 5-(methylsulfanyl)-D-ribulose 1-phosphate. Functionally, catalyzes the interconversion of methylthioribose-1-phosphate (MTR-1-P) into methylthioribulose-1-phosphate (MTRu-1-P). This Methanothermobacter thermautotrophicus (strain ATCC 29096 / DSM 1053 / JCM 10044 / NBRC 100330 / Delta H) (Methanobacterium thermoautotrophicum) protein is Putative methylthioribose-1-phosphate isomerase.